The chain runs to 399 residues: Putative endoplasmin-like protein (399 aa).

Lys130 participates in a covalent cross-link: Glycyl lysine isopeptide (Lys-Gly) (interchain with G-Cter in SUMO2). Positions 350 to 399 are disordered; that stretch reads LDLAVVEEPDEEPEETAEDKEQDKDKEMDVGTDEEKQETAKESTAEKDEL. Over residues 354–367 the composition is skewed to acidic residues; the sequence is VVEEPDEEPEETAE. Positions 368-399 are enriched in basic and acidic residues; sequence DKEQDKDKEMDVGTDEEKQETAKESTAEKDEL.

It belongs to the heat shock protein 90 family.

Putative molecular chaperone. The polypeptide is Putative endoplasmin-like protein (HSP90B2P) (Homo sapiens (Human)).